A 1077-amino-acid polypeptide reads, in one-letter code: Semaphorin-5A (1077 aa).

A signal peptide spans 1 to 21 (MKGACILAWLFSSLGVWRLAR). Residues 22 to 971 (PETQDPAKCQ…RCGEFNMFHM (950 aa)) are Extracellular-facing. Residues 35–484 (HPVVSYKEIG…LQEHVAKIPL (450 aa)) enclose the Sema domain. 2 disulfide bridges follow: C104/C114 and C131/C140. Residues N147, N168, N227, and N277 are each glycosylated (N-linked (GlcNAc...) asparagine). Cystine bridges form between C254–C357 and C278–C320. N323 and N367 each carry an N-linked (GlcNAc...) asparagine glycan. Intrachain disulfides connect C487-C504 and C496-C513. Residues N536 and N591 are each glycosylated (N-linked (GlcNAc...) asparagine). TSP type-1 domains are found at residues 540-593 (DGSF…TNCS), 595-651 (NGGW…LLCP), 653-702 (HVFW…NACP), 707-765 (TTPW…GCST), 784-839 (NGAW…LPCP), 841-896 (DGVW…QTCP), and 897-944 (ESWS…VFDS). 6 cysteine pairs are disulfide-bonded: C607-C644, C611-C650, C622-C634, C665-C696, C669-C701, and C680-C686. A glycan (N-linked (GlcNAc...) asparagine) is linked at N717. Cystine bridges form between C796/C833, C800/C838, C811/C823, C853/C890, C857/C895, and C868/C880. N-linked (GlcNAc...) asparagine glycosylation occurs at N933. Residues 972–992 (FHMMAVGLSSSILGCLLTLLV) form a helical membrane-spanning segment. The Cytoplasmic portion of the chain corresponds to 993-1077 (YTYCQRYQQQ…FTDLNNYDEY (85 aa)).

It belongs to the semaphorin family. Binds PLXNB3. In adult, detected in liver, brain, kidney, heart, lung and spleen.

It localises to the membrane. In terms of biological role, bifunctional axonal guidance cue regulated by sulfated proteoglycans; attractive effects result from interactions with heparan sulfate proteoglycans (HSPGs), while the inhibitory effects depend on interactions with chondroitin sulfate proteoglycans (CSPGs). Ligand for receptor PLXNB3. In glioma cells, SEMA5A stimulation of PLXNB3 results in the disassembly of F-actin stress fibers, disruption of focal adhesions and cellular collapse as well as inhibition of cell migration and invasion through ARHGDIA-mediated inactivation of RAC1. May promote angiogenesis by increasing endothelial cell proliferation and migration and inhibiting apoptosis. The polypeptide is Semaphorin-5A (Sema5a) (Mus musculus (Mouse)).